We begin with the raw amino-acid sequence, 1430 residues long: Transport and Golgi organization protein 1 (1430 aa).

An N-terminal signal peptide occupies residues 1 to 34; it reads MRLTNEKATMQPQLSDLALVLGLLICCLPTLTWA. The Extracellular segment spans residues 35–796; sequence ATLSDKRLCA…ADKLVDHSQL (762 aa). An SH3 domain is found at 50–112; it reads QIISMGIAKI…NKDFIMEKKI (63 aa). Disordered regions lie at residues 253-272, 284-303, 318-362, 445-524, and 568-673; these read QEEPKAQQPATEAEKPPPLP, DFDYGDDETDDDSQQGSQDN, ESIE…SLPT, SDAE…DQQK, and EEAE…TDNH. Acidic residues predominate over residues 284 to 296; the sequence is DFDYGDDETDDDS. Basic and acidic residues-rich tracts occupy residues 331–357, 497–524, and 568–588; these read KKTDKVEDSKDETKEKHAEMEVSKQED, LQEEQEKQRLVAEAEEQKRLQEEADQQK, and EEAEKQKRLHEESEQLQRSSE. Positions 494–620 form a coiled coil; it reads YKQLQEEQEK…QSNEIVDNNN (127 aa). Residues 594-621 are compositionally biased toward polar residues; sequence LSVQEANMQQLNDSVDSQSNEIVDNNNR. The segment covering 640–651 has biased composition (low complexity); the sequence is HPSTASHTTPTP. Residues 797–817 form a helical membrane-spanning segment; that stretch reads LLCVVIAAISSLFFMFAYYCF. The Cytoplasmic segment spans residues 818-1430; sequence CNSSQEGALL…SATSRPYSEV (613 aa). A phosphoserine mark is found at serine 865 and serine 868. A coiled-coil region spans residues 869-1245; the sequence is NDMVADLKKQ…SLRRKLTTMA (377 aa). The span at 1105–1114 shows a compositional bias: low complexity; it reads SQLQQSSQDV. Disordered regions lie at residues 1105–1126 and 1312–1430; these read SQLQQSSQDVEQLKQDFNQSER and LPPT…YSEV. The segment covering 1115-1126 has biased composition (basic and acidic residues); that stretch reads EQLKQDFNQSER. Positions 1321–1334 are enriched in pro residues; it reads RPPPLGRMRSPPPS. Residues 1336–1346 are compositionally biased toward basic and acidic residues; it reads RGDRDRERYSD. A phosphoserine mark is found at serine 1345 and serine 1348. Over residues 1348–1361 the composition is skewed to acidic residues; the sequence is SDYDDYDDDEEDDR. The segment covering 1364–1380 has biased composition (basic residues); sequence DRRRRHSGSWGRRHRGS. Residues 1387–1402 are compositionally biased toward polar residues; the sequence is TYRSLSPSDSRYNYND. A phosphoserine mark is found at serine 1390 and serine 1392. Over residues 1408-1417 the composition is skewed to pro residues; it reads SPPPSPPPVP. The span at 1420–1430 shows a compositional bias: polar residues; that stretch reads RSATSRPYSEV.

The protein belongs to the MIA/OTOR family. Tango1 subfamily.

It is found in the golgi apparatus membrane. The protein localises to the golgi apparatus. It localises to the trans-Golgi network. Required for protein secretion. May participate in cargo loading by binding to COPII coat subunits and guiding SH3-bound proteins into a growing carrier. At basal transitional ER sites in follicle epithelial cells, mediates the exit of basal membrane protein such as vkg, LanB1 and Trol, from the endoplasmic reticulum (ER) to basal Golgi clusters. The chain is Transport and Golgi organization protein 1 from Drosophila melanogaster (Fruit fly).